The sequence spans 140 residues: Putative pre-16S rRNA nuclease (140 aa).

Belongs to the YqgF nuclease family.

It is found in the cytoplasm. In terms of biological role, could be a nuclease involved in processing of the 5'-end of pre-16S rRNA. The polypeptide is Putative pre-16S rRNA nuclease (Vibrio vulnificus (strain CMCP6)).